The following is a 539-amino-acid chain: Glucans biosynthesis protein D (539 aa).

A signal peptide (tat-type signal) is located at residues 1 to 29; it reads MNRRNLLKASMALAAYGSVSASGLFAARA.

This sequence belongs to the OpgD/OpgG family. Predicted to be exported by the Tat system. The position of the signal peptide cleavage has not been experimentally proven.

The protein localises to the periplasm. It participates in glycan metabolism; osmoregulated periplasmic glucan (OPG) biosynthesis. Its function is as follows. Probably involved in the control of the structural glucose backbone of osmoregulated periplasmic glucans (OPGs). The polypeptide is Glucans biosynthesis protein D (Pseudomonas syringae pv. syringae (strain B728a)).